The chain runs to 380 residues: Chaperone protein DnaJ (380 aa).

The 68-residue stretch at 5–72 (DYYDTLGVPK…QKRAAYDQYG (68 aa)) folds into the J domain. The tract at residues 21–47 (IKKAYRKLAMKHHPDRNQGDTSKVSED) is disordered. The span at 24–34 (AYRKLAMKHHP) shows a compositional bias: basic residues. Basic and acidic residues predominate over residues 35 to 47 (DRNQGDTSKVSED). The CR-type zinc finger occupies 139–217 (GKEAQIRIPS…CHGVGKTKNN (79 aa)). Cysteine 152, cysteine 155, cysteine 169, cysteine 172, cysteine 191, cysteine 194, cysteine 205, and cysteine 208 together coordinate Zn(2+). CXXCXGXG motif repeat units lie at residues 152 to 159 (CGICHGTG), 169 to 176 (CTTCHGHG), 191 to 198 (CPQCKGSG), and 205 to 212 (CVACHGVG).

The protein belongs to the DnaJ family. In terms of assembly, homodimer. Requires Zn(2+) as cofactor.

It is found in the cytoplasm. Functionally, participates actively in the response to hyperosmotic and heat shock by preventing the aggregation of stress-denatured proteins and by disaggregating proteins, also in an autonomous, DnaK-independent fashion. Unfolded proteins bind initially to DnaJ; upon interaction with the DnaJ-bound protein, DnaK hydrolyzes its bound ATP, resulting in the formation of a stable complex. GrpE releases ADP from DnaK; ATP binding to DnaK triggers the release of the substrate protein, thus completing the reaction cycle. Several rounds of ATP-dependent interactions between DnaJ, DnaK and GrpE are required for fully efficient folding. Also involved, together with DnaK and GrpE, in the DNA replication of plasmids through activation of initiation proteins. The chain is Chaperone protein DnaJ from Polaromonas naphthalenivorans (strain CJ2).